A 508-amino-acid polypeptide reads, in one-letter code: Probable cytosol aminopeptidase (508 aa).

Mn(2+) contacts are provided by Lys274 and Asp279. Residue Lys286 is part of the active site. Asp297, Asp356, and Glu358 together coordinate Mn(2+). Arg360 is an active-site residue.

Belongs to the peptidase M17 family. Mn(2+) serves as cofactor.

The protein localises to the cytoplasm. The enzyme catalyses Release of an N-terminal amino acid, Xaa-|-Yaa-, in which Xaa is preferably Leu, but may be other amino acids including Pro although not Arg or Lys, and Yaa may be Pro. Amino acid amides and methyl esters are also readily hydrolyzed, but rates on arylamides are exceedingly low.. The catalysed reaction is Release of an N-terminal amino acid, preferentially leucine, but not glutamic or aspartic acids.. In terms of biological role, presumably involved in the processing and regular turnover of intracellular proteins. Catalyzes the removal of unsubstituted N-terminal amino acids from various peptides. This Paraburkholderia phytofirmans (strain DSM 17436 / LMG 22146 / PsJN) (Burkholderia phytofirmans) protein is Probable cytosol aminopeptidase.